A 214-amino-acid polypeptide reads, in one-letter code: Ribonuclease HII (214 aa).

An RNase H type-2 domain is found at 26-214 (EIVCGVDEAG…PVRAALDLIR (189 aa)). 3 residues coordinate a divalent metal cation: D32, E33, and D124.

The protein belongs to the RNase HII family. Requires Mn(2+) as cofactor. It depends on Mg(2+) as a cofactor.

It localises to the cytoplasm. It carries out the reaction Endonucleolytic cleavage to 5'-phosphomonoester.. Its function is as follows. Endonuclease that specifically degrades the RNA of RNA-DNA hybrids. The chain is Ribonuclease HII from Burkholderia cenocepacia (strain HI2424).